The chain runs to 89 residues: Small ribosomal subunit protein uS15 (89 aa).

The protein belongs to the universal ribosomal protein uS15 family. Part of the 30S ribosomal subunit. Forms a bridge to the 50S subunit in the 70S ribosome, contacting the 23S rRNA.

Functionally, one of the primary rRNA binding proteins, it binds directly to 16S rRNA where it helps nucleate assembly of the platform of the 30S subunit by binding and bridging several RNA helices of the 16S rRNA. Forms an intersubunit bridge (bridge B4) with the 23S rRNA of the 50S subunit in the ribosome. The protein is Small ribosomal subunit protein uS15 of Renibacterium salmoninarum (strain ATCC 33209 / DSM 20767 / JCM 11484 / NBRC 15589 / NCIMB 2235).